Reading from the N-terminus, the 94-residue chain is Large ribosomal subunit protein bL27 (94 aa).

Residues 1-10 (MQFLFNIQLF) constitute a propeptide that is removed on maturation.

Belongs to the bacterial ribosomal protein bL27 family. The N-terminus is cleaved by ribosomal processing cysteine protease Prp.

This is Large ribosomal subunit protein bL27 from Fusobacterium nucleatum subsp. nucleatum (strain ATCC 25586 / DSM 15643 / BCRC 10681 / CIP 101130 / JCM 8532 / KCTC 2640 / LMG 13131 / VPI 4355).